The sequence spans 199 residues: Chaperone protein TorD (199 aa).

Belongs to the TorD/DmsD family. TorD subfamily.

The protein localises to the cytoplasm. Functionally, involved in the biogenesis of TorA. Acts on TorA before the insertion of the molybdenum cofactor and, as a result, probably favors a conformation of the apoenzyme that is competent for acquiring the cofactor. The protein is Chaperone protein TorD of Escherichia coli O8 (strain IAI1).